A 190-amino-acid chain; its full sequence is UPF0200 protein TGAM_0868 (190 aa).

G7 to S14 provides a ligand contact to ATP.

This sequence belongs to the UPF0200 family.

The chain is UPF0200 protein TGAM_0868 from Thermococcus gammatolerans (strain DSM 15229 / JCM 11827 / EJ3).